A 210-amino-acid chain; its full sequence is Outer-membrane lipoprotein LolB (210 aa).

The first 18 residues, 1–18 (MKKFTKILSLSTLLFLAG), serve as a signal peptide directing secretion. Cys19 carries N-palmitoyl cysteine lipidation. Cys19 carries S-diacylglycerol cysteine lipidation.

The protein belongs to the LolB family. Monomer.

It localises to the cell outer membrane. Plays a critical role in the incorporation of lipoproteins in the outer membrane after they are released by the LolA protein. The polypeptide is Outer-membrane lipoprotein LolB (Actinobacillus pleuropneumoniae serotype 5b (strain L20)).